The sequence spans 289 residues: WUSCHEL-related homeobox 1 (289 aa).

Residues 1-11 (MDHMQQQQRQQ) are compositionally biased toward low complexity. The segment at 1–34 (MDHMQQQQRQQVGGGGGEEVAGRGGVPVCRPSGT) is disordered. Positions 12–25 (VGGGGGEEVAGRGG) are enriched in gly residues. Residues 31-96 (PSGTRWTPTT…NHKARERQKK (66 aa)) constitute a DNA-binding region (homeobox; WUS-type).

Belongs to the WUS homeobox family. As to quaternary structure, interacts with TPR1, TPR2 and TPR3. As to expression, expressed in young leaf primordia. Expressed in branch an floral meristems. Transiently expressed in the shoot apex.

Its subcellular location is the nucleus. Its function is as follows. Transcription repressor required for the formation and development of tiller buds and panicles. Required for tiller formation and female sterility. Required for the early developmental stages of axillary meristem formation. Plays a role in maintaining the axillary premeristem zone and in promoting the formation of the axillary meristem by promoting OSH1 expression. Does not seem to be involved in maintenance of the shoot apical meristem (SAM). This chain is WUSCHEL-related homeobox 1, found in Oryza sativa subsp. japonica (Rice).